The primary structure comprises 121 residues: Flagellar protein FliT (121 aa).

The required for homodimerization stretch occupies residues 1–50 (MNNAPHLYFAWQQLVEKSQLMLRLATEEQWDELIASEMAYVNAVQEIAHL). A fliD binding region spans residues 60–98 (MQEQLRPMLLLILDNESKVKQLLQIRMDELAKLVGQSSV).

It belongs to the FliT family. As to quaternary structure, homodimer. Interacts with FliD and FlhC.

The protein localises to the cytoplasm. The protein resides in the cytosol. Functionally, dual-function protein that regulates the transcription of class 2 flagellar operons and that also acts as an export chaperone for the filament-capping protein FliD. As a transcriptional regulator, acts as an anti-FlhDC factor; it directly binds FlhC, thus inhibiting the binding of the FlhC/FlhD complex to class 2 promoters, resulting in decreased expression of class 2 flagellar operons. As a chaperone, effects FliD transition to the membrane by preventing its premature polymerization, and by directing it to the export apparatus. The chain is Flagellar protein FliT from Escherichia coli O6:K15:H31 (strain 536 / UPEC).